Here is a 93-residue protein sequence, read N- to C-terminus: Putative regulatory protein Clos_1422 (93 aa).

This sequence belongs to the RemA family.

The sequence is that of Putative regulatory protein Clos_1422 from Alkaliphilus oremlandii (strain OhILAs) (Clostridium oremlandii (strain OhILAs)).